A 106-amino-acid chain; its full sequence is uncharacterized protein (106 aa).

The next 3 helical transmembrane spans lie at 4–24 (LPVV…IGFL), 27–47 (MLLR…LFII), and 78–98 (VLIL…INML).

The protein resides in the cell membrane. This is an uncharacterized protein from Bacillus subtilis (strain 168).